The primary structure comprises 348 residues: Lipoyl synthase (348 aa).

Residues Cys-55, Cys-60, Cys-66, Cys-81, Cys-85, Cys-88, and Ser-292 each coordinate [4Fe-4S] cluster. Residues 67-281 form the Radical SAM core domain; sequence WESREATFLI…SDEAYEIGFA (215 aa).

This sequence belongs to the radical SAM superfamily. Lipoyl synthase family. It depends on [4Fe-4S] cluster as a cofactor.

It localises to the cytoplasm. It carries out the reaction [[Fe-S] cluster scaffold protein carrying a second [4Fe-4S](2+) cluster] + N(6)-octanoyl-L-lysyl-[protein] + 2 oxidized [2Fe-2S]-[ferredoxin] + 2 S-adenosyl-L-methionine + 4 H(+) = [[Fe-S] cluster scaffold protein] + N(6)-[(R)-dihydrolipoyl]-L-lysyl-[protein] + 4 Fe(3+) + 2 hydrogen sulfide + 2 5'-deoxyadenosine + 2 L-methionine + 2 reduced [2Fe-2S]-[ferredoxin]. Its pathway is protein modification; protein lipoylation via endogenous pathway; protein N(6)-(lipoyl)lysine from octanoyl-[acyl-carrier-protein]: step 2/2. Its function is as follows. Catalyzes the radical-mediated insertion of two sulfur atoms into the C-6 and C-8 positions of the octanoyl moiety bound to the lipoyl domains of lipoate-dependent enzymes, thereby converting the octanoylated domains into lipoylated derivatives. The protein is Lipoyl synthase of Corynebacterium efficiens (strain DSM 44549 / YS-314 / AJ 12310 / JCM 11189 / NBRC 100395).